The chain runs to 94 residues: Aspartyl/glutamyl-tRNA(Asn/Gln) amidotransferase subunit C (94 aa).

This sequence belongs to the GatC family. As to quaternary structure, heterotrimer of A, B and C subunits.

The enzyme catalyses L-glutamyl-tRNA(Gln) + L-glutamine + ATP + H2O = L-glutaminyl-tRNA(Gln) + L-glutamate + ADP + phosphate + H(+). It carries out the reaction L-aspartyl-tRNA(Asn) + L-glutamine + ATP + H2O = L-asparaginyl-tRNA(Asn) + L-glutamate + ADP + phosphate + 2 H(+). In terms of biological role, allows the formation of correctly charged Asn-tRNA(Asn) or Gln-tRNA(Gln) through the transamidation of misacylated Asp-tRNA(Asn) or Glu-tRNA(Gln) in organisms which lack either or both of asparaginyl-tRNA or glutaminyl-tRNA synthetases. The reaction takes place in the presence of glutamine and ATP through an activated phospho-Asp-tRNA(Asn) or phospho-Glu-tRNA(Gln). The protein is Aspartyl/glutamyl-tRNA(Asn/Gln) amidotransferase subunit C of Heliobacterium modesticaldum (strain ATCC 51547 / Ice1).